Here is a 340-residue protein sequence, read N- to C-terminus: UDP-3-O-acylglucosamine N-acyltransferase (340 aa).

Histidine 238 serves as the catalytic Proton acceptor.

This sequence belongs to the transferase hexapeptide repeat family. LpxD subfamily. Homotrimer.

It carries out the reaction a UDP-3-O-[(3R)-3-hydroxyacyl]-alpha-D-glucosamine + a (3R)-hydroxyacyl-[ACP] = a UDP-2-N,3-O-bis[(3R)-3-hydroxyacyl]-alpha-D-glucosamine + holo-[ACP] + H(+). It functions in the pathway bacterial outer membrane biogenesis; LPS lipid A biosynthesis. Its function is as follows. Catalyzes the N-acylation of UDP-3-O-acylglucosamine using 3-hydroxyacyl-ACP as the acyl donor. Is involved in the biosynthesis of lipid A, a phosphorylated glycolipid that anchors the lipopolysaccharide to the outer membrane of the cell. The chain is UDP-3-O-acylglucosamine N-acyltransferase from Shewanella denitrificans (strain OS217 / ATCC BAA-1090 / DSM 15013).